The primary structure comprises 293 residues: 4-hydroxy-tetrahydrodipicolinate synthase (293 aa).

Thr-47 provides a ligand contact to pyruvate. Residue Tyr-135 is the Proton donor/acceptor of the active site. Residue Lys-164 is the Schiff-base intermediate with substrate of the active site. Ile-205 is a binding site for pyruvate.

The protein belongs to the DapA family. Homotetramer; dimer of dimers.

The protein localises to the cytoplasm. It carries out the reaction L-aspartate 4-semialdehyde + pyruvate = (2S,4S)-4-hydroxy-2,3,4,5-tetrahydrodipicolinate + H2O + H(+). It participates in amino-acid biosynthesis; L-lysine biosynthesis via DAP pathway; (S)-tetrahydrodipicolinate from L-aspartate: step 3/4. In terms of biological role, catalyzes the condensation of (S)-aspartate-beta-semialdehyde [(S)-ASA] and pyruvate to 4-hydroxy-tetrahydrodipicolinate (HTPA). This is 4-hydroxy-tetrahydrodipicolinate synthase from Symbiobacterium thermophilum (strain DSM 24528 / JCM 14929 / IAM 14863 / T).